Consider the following 149-residue polypeptide: Arginine repressor (149 aa).

Belongs to the ArgR family.

It localises to the cytoplasm. It functions in the pathway amino-acid biosynthesis; L-arginine biosynthesis [regulation]. Functionally, regulates arginine biosynthesis genes. The polypeptide is Arginine repressor (Listeria welshimeri serovar 6b (strain ATCC 35897 / DSM 20650 / CCUG 15529 / CIP 8149 / NCTC 11857 / SLCC 5334 / V8)).